We begin with the raw amino-acid sequence, 488 residues long: ATP synthase subunit beta (488 aa).

164–171 provides a ligand contact to ATP; the sequence is GGAGVGKT.

The protein belongs to the ATPase alpha/beta chains family. In terms of assembly, F-type ATPases have 2 components, CF(1) - the catalytic core - and CF(0) - the membrane proton channel. CF(1) has five subunits: alpha(3), beta(3), gamma(1), delta(1), epsilon(1). CF(0) has four main subunits: a(1), b(1), b'(1) and c(9-12).

Its subcellular location is the cellular thylakoid membrane. The enzyme catalyses ATP + H2O + 4 H(+)(in) = ADP + phosphate + 5 H(+)(out). Produces ATP from ADP in the presence of a proton gradient across the membrane. The catalytic sites are hosted primarily by the beta subunits. In Prochlorococcus marinus (strain NATL1A), this protein is ATP synthase subunit beta.